The primary structure comprises 119 residues: Protein ELF4-LIKE 2 (119 aa).

The disordered stretch occupies residues 91–119 (SVDASSEGESTGTLKSDGKANNQKRFRSG). A compositionally biased stretch (polar residues) spans 93 to 111 (DASSEGESTGTLKSDGKAN).

It belongs to the EARLY FLOWERING 4 family. As to quaternary structure, homodimer.

It is found in the nucleus. Functionally, component of the central CCA1/LHY-TOC1 feedback loop in the circadian clock that promotes clock accuracy and is required for sustained rhythms in the absence of daily light/dark cycles. The sequence is that of Protein ELF4-LIKE 2 (EFL2) from Arabidopsis thaliana (Mouse-ear cress).